The primary structure comprises 1357 residues: DNA-directed RNA polymerase subunit beta (1357 aa).

This sequence belongs to the RNA polymerase beta chain family. The RNAP catalytic core consists of 2 alpha, 1 beta, 1 beta' and 1 omega subunit. When a sigma factor is associated with the core the holoenzyme is formed, which can initiate transcription.

The catalysed reaction is RNA(n) + a ribonucleoside 5'-triphosphate = RNA(n+1) + diphosphate. DNA-dependent RNA polymerase catalyzes the transcription of DNA into RNA using the four ribonucleoside triphosphates as substrates. This Nitrosomonas europaea (strain ATCC 19718 / CIP 103999 / KCTC 2705 / NBRC 14298) protein is DNA-directed RNA polymerase subunit beta.